The sequence spans 47 residues: Antimicrobial peptide LCI (47 aa).

The protein resides in the secreted. Has antibacterial activity against X.oryzae pv oryzae and R.solanacearum, but not E.coli or P.carotovorum subsp carotovorum. May bind DNA or mRNA. This is Antimicrobial peptide LCI from Bacillus subtilis.